A 348-amino-acid chain; its full sequence is Protein RecA (348 aa).

66 to 73 (GPESSGKT) contributes to the ATP binding site.

It belongs to the RecA family.

The protein resides in the cytoplasm. Its function is as follows. Can catalyze the hydrolysis of ATP in the presence of single-stranded DNA, the ATP-dependent uptake of single-stranded DNA by duplex DNA, and the ATP-dependent hybridization of homologous single-stranded DNAs. It interacts with LexA causing its activation and leading to its autocatalytic cleavage. The polypeptide is Protein RecA (Legionella pneumophila).